We begin with the raw amino-acid sequence, 96 residues long: Protein Vpr (96 aa).

Residues 1 to 42 (MEQAPEDQGPQREPYNEWTLELLEELKSEAVRHFPRIWLHSL) are homooligomerization. A phosphoserine; by host mark is found at Ser79, Ser94, and Ser96.

It belongs to the HIV-1 VPR protein family. Homooligomer, may form homodimer. Interacts with p6-gag region of the Pr55 Gag precursor protein through a (Leu-X-X)4 motif near the C-terminus of the P6gag protein. Interacts with host UNG. May interact with host RAD23A/HHR23A. Interacts with host VPRBP/DCAF1, leading to hijack the CUL4A-RBX1-DDB1-DCAF1/VPRBP complex, mediating ubiquitination of host proteins such as TERT and ZGPAT and arrest of the cell cycle in G2 phase. Phosphorylated on several residues by host. These phosphorylations regulate VPR activity for the nuclear import of the HIV-1 pre-integration complex.

It is found in the virion. The protein resides in the host nucleus. It localises to the host extracellular space. Functionally, during virus replication, may deplete host UNG protein, and incude G2-M cell cycle arrest. Acts by targeting specific host proteins for degradation by the 26S proteasome, through association with the cellular CUL4A-DDB1 E3 ligase complex by direct interaction with host VPRPB/DCAF-1. Cell cycle arrest reportedly occurs within hours of infection and is not blocked by antiviral agents, suggesting that it is initiated by the VPR carried into the virion. Additionally, VPR induces apoptosis in a cell cycle dependent manner suggesting that these two effects are mechanistically linked. Detected in the serum and cerebrospinal fluid of AIDS patient, VPR may also induce cell death to bystander cells. Its function is as follows. During virus entry, plays a role in the transport of the viral pre-integration (PIC) complex to the host nucleus. This function is crucial for viral infection of non-dividing macrophages. May act directly at the nuclear pore complex, by binding nucleoporins phenylalanine-glycine (FG)-repeat regions. This is Protein Vpr from Homo sapiens (Human).